We begin with the raw amino-acid sequence, 271 residues long: ATP synthase subunit delta (271 aa).

It belongs to the ATPase delta chain family. F-type ATPases have 2 components, F(1) - the catalytic core - and F(0) - the membrane proton channel. F(1) has five subunits: alpha(3), beta(3), gamma(1), delta(1), epsilon(1). F(0) has three main subunits: a(1), b(2) and c(10-14). The alpha and beta chains form an alternating ring which encloses part of the gamma chain. F(1) is attached to F(0) by a central stalk formed by the gamma and epsilon chains, while a peripheral stalk is formed by the delta and b chains.

Its subcellular location is the cell membrane. F(1)F(0) ATP synthase produces ATP from ADP in the presence of a proton or sodium gradient. F-type ATPases consist of two structural domains, F(1) containing the extramembraneous catalytic core and F(0) containing the membrane proton channel, linked together by a central stalk and a peripheral stalk. During catalysis, ATP synthesis in the catalytic domain of F(1) is coupled via a rotary mechanism of the central stalk subunits to proton translocation. Functionally, this protein is part of the stalk that links CF(0) to CF(1). It either transmits conformational changes from CF(0) to CF(1) or is implicated in proton conduction. The sequence is that of ATP synthase subunit delta from Corynebacterium glutamicum (strain R).